The primary structure comprises 1470 residues: Rap guanine nucleotide exchange factor (1470 aa).

Disordered regions lie at residues 130–227 (PTEP…SYND) and 250–313 (HRRE…GGFM). The span at 173–183 (MPPPPVPPRPL) shows a compositional bias: pro residues. Composition is skewed to low complexity over residues 184–193 (RLPQTAAKGP) and 215–224 (TTSSSSSNTS). A compositionally biased stretch (polar residues) spans 256–266 (NSVGGQAQNGI). Low complexity predominate over residues 275-292 (RSTASSTTTEGETASNEG). 347-463 (AFAALPMSIK…IEKDRDGLTG (117 aa)) is a binding site for a nucleoside 3',5'-cyclic phosphate. Residues 478–592 (CGQVLIKGKP…SLLNIACSVK (115 aa)) form the N-terminal Ras-GEF domain. The region spanning 597-679 (QVILTRRKDD…LTLMLKNNVL (83 aa)) is the PDZ domain. One can recognise a Ras-associating domain in the interval 782-869 (PEHVLKIYRN…SRYYLKNNSR (88 aa)). The 231-residue stretch at 894-1124 (NAQVVAAQLT…FENSNVATMR (231 aa)) folds into the Ras-GEF domain. The span at 1176-1189 (QTAHRGANSSSTAN) shows a compositional bias: polar residues. Disordered stretches follow at residues 1176–1213 (QTAH…DQSS), 1253–1326 (KVKG…NIPP), 1347–1370 (VIPT…PASS), and 1422–1455 (ATLP…RMGT). The segment covering 1198-1211 (PSSLSSQSAGSADQ) has biased composition (low complexity). Polar residues-rich tracts occupy residues 1260–1274 (QITS…SLQR) and 1282–1308 (RQAT…YQSD). Residues 1309–1321 (NGRRQRSGSEGRF) are compositionally biased toward basic and acidic residues. The span at 1349–1370 (PTHPHGHSPTSPRCRSRSPASS) shows a compositional bias: low complexity.

Belongs to the RAPGEF2 family. In terms of tissue distribution, expressed in hermaphrodite-specific neurons (HSNs), oviduct sheath cells and lateral seam cells.

Its function is as follows. Acts as a guanine nucleotide exchange factor for small G protein GTPases like rap-1 and rap-2. Required in the hypodermis, especially in the seam cells, for proper formation of the cuticle. The protein is Rap guanine nucleotide exchange factor (pxf-1) of Caenorhabditis elegans.